The following is a 172-amino-acid chain: Epididymal secretory protein 4 (172 aa).

A signal peptide spans 1–21 (MIAVLLLVFGMTPDYIFPVSA). Residues C82 and C167 are joined by a disulfide bond.

This sequence belongs to the calycin superfamily. Lipocalin family. In terms of tissue distribution, secreted by the epididymal epithelial cells.

The protein localises to the secreted. The protein resides in the extracellular space. In terms of biological role, could transport small hydrophobic molecules into the epididymal fluid during the sperm maturation. Binds to the head region of spermatozoa and plays a key role in sperm maturation. The polypeptide is Epididymal secretory protein 4 (Zootoca vivipara (Common lizard)).